Consider the following 426-residue polypeptide: Transcription termination factor Rho (426 aa).

The region spanning 58–131 is the Rho RNA-BD domain; the sequence is QSLARGYLDI…VRVEAVNGLD (74 aa). Residues 176 to 181, 188 to 193, and arginine 219 each bind ATP; these read GRGQRA and KAGKTT.

Belongs to the Rho family. As to quaternary structure, homohexamer. The homohexamer assembles into an open ring structure.

Its function is as follows. Facilitates transcription termination by a mechanism that involves Rho binding to the nascent RNA, activation of Rho's RNA-dependent ATPase activity, and release of the mRNA from the DNA template. The sequence is that of Transcription termination factor Rho from Deinococcus radiodurans (strain ATCC 13939 / DSM 20539 / JCM 16871 / CCUG 27074 / LMG 4051 / NBRC 15346 / NCIMB 9279 / VKM B-1422 / R1).